Here is a 383-residue protein sequence, read N- to C-terminus: TnpB-like protein ORF383B (383 aa).

Cysteine 328, cysteine 331, cysteine 345, and cysteine 348 together coordinate Zn(2+).

In the N-terminal section; belongs to the transposase 2 family. This sequence in the C-terminal section; belongs to the transposase 35 family.

The protein is TnpB-like protein ORF383B of Acidianus convivator (ATV).